Here is a 139-residue protein sequence, read N- to C-terminus: Arsenate reductase (139 aa).

Active-site nucleophile residues include Cys10, Cys82, and Cys89. 2 cysteine pairs are disulfide-bonded: Cys10–Cys82 and Cys82–Cys89.

The protein belongs to the low molecular weight phosphotyrosine protein phosphatase family. Thioredoxin-coupled ArsC subfamily.

The protein resides in the cytoplasm. It carries out the reaction arsenate + [thioredoxin]-dithiol + H(+) = arsenite + [thioredoxin]-disulfide + H2O. In terms of biological role, catalyzes the reduction of arsenate [As(V)] to arsenite [As(III)]. In Shouchella clausii (strain KSM-K16) (Alkalihalobacillus clausii), this protein is Arsenate reductase.